The primary structure comprises 1167 residues: Non-toxic nonhemagglutinin (1167 aa).

The interval Met-1 to Asn-381 is light chain nLC. Positions Asn-382–Ile-804 are N-heavy chain nHN. The segment at Lys-805–Ile-1167 is C-heavy chain nHC.

The protein belongs to the botulism non-toxic nonhemagglutinin family.

In terms of biological role, expression of the ptox operon (ntnh-orfX1-orfX2-orfX3-pmp1) in B.thuringiensis kills Anopheles but not Aedes mosquito 3rd instar larvae. The ntnh-pmp1 construct is about half as toxic. This Paraclostridium bifermentans (Clostridium bifermentans) protein is Non-toxic nonhemagglutinin.